A 118-amino-acid chain; its full sequence is Large ribosomal subunit protein bL20 (118 aa).

It belongs to the bacterial ribosomal protein bL20 family.

Binds directly to 23S ribosomal RNA and is necessary for the in vitro assembly process of the 50S ribosomal subunit. It is not involved in the protein synthesizing functions of that subunit. In Enterobacter sp. (strain 638), this protein is Large ribosomal subunit protein bL20.